Reading from the N-terminus, the 450-residue chain is UDP-N-acetylmuramoylalanine--D-glutamate ligase (450 aa).

119 to 125 (GSNGKTT) is a binding site for ATP.

It belongs to the MurCDEF family.

It is found in the cytoplasm. The catalysed reaction is UDP-N-acetyl-alpha-D-muramoyl-L-alanine + D-glutamate + ATP = UDP-N-acetyl-alpha-D-muramoyl-L-alanyl-D-glutamate + ADP + phosphate + H(+). It functions in the pathway cell wall biogenesis; peptidoglycan biosynthesis. In terms of biological role, cell wall formation. Catalyzes the addition of glutamate to the nucleotide precursor UDP-N-acetylmuramoyl-L-alanine (UMA). The protein is UDP-N-acetylmuramoylalanine--D-glutamate ligase of Bacillus cereus (strain AH187).